A 147-amino-acid polypeptide reads, in one-letter code: Acidic phospholipase A2 1 (147 aa).

The signal sequence occupies residues 1–19 (MNPAHLLVLAAVCVSLLGA). A propeptide spanning residues 20–27 (AIVPPQPL) is cleaved from the precursor. Disulfide bonds link C38-C99, C54-C146, C56-C72, C71-C127, C78-C120, C88-C113, and C106-C118. 3 residues coordinate Ca(2+): Y55, G57, and G59. The active site involves H75. D76 is a Ca(2+) binding site. The active site involves D121.

Belongs to the phospholipase A2 family. Group I subfamily. D49 sub-subfamily. Requires Ca(2+) as cofactor. Expressed by the venom gland.

The protein resides in the secreted. The catalysed reaction is a 1,2-diacyl-sn-glycero-3-phosphocholine + H2O = a 1-acyl-sn-glycero-3-phosphocholine + a fatty acid + H(+). PLA2 catalyzes the calcium-dependent hydrolysis of the 2-acyl groups in 3-sn-phosphoglycerides. The sequence is that of Acidic phospholipase A2 1 from Bungarus flaviceps flaviceps (Red-headed krait).